The following is a 196-amino-acid chain: MIFSISKRKLICGFLLVILTIGGVLGGVYLVTKNNKDNYQNESNFNNQEQISKIPNFKAIGPETQRILRERNYPLDDSGYYVYKYGEINRYLRNESELDELINYRVMVPSLKLHHKRVNFDKAFLESKLRKWIIKAIKQHNYFQHFENEPNLRVQYNMNIPAQKIDVNAVWSYKKDNDAATGKPIRYWDQFELKLK.

The helical transmembrane segment at 11 to 31 (ICGFLLVILTIGGVLGGVYLV) threads the bilayer.

Its subcellular location is the membrane. This is an uncharacterized protein from Mycoplasma genitalium (strain ATCC 33530 / DSM 19775 / NCTC 10195 / G37) (Mycoplasmoides genitalium).